The sequence spans 369 residues: tRNA-specific 2-thiouridylase MnmA (369 aa).

Residues alanine 16–serine 23 and methionine 42 contribute to the ATP site. Catalysis depends on cysteine 110, which acts as the Nucleophile. Cysteine 110 and cysteine 206 are oxidised to a cystine. Glycine 134 lines the ATP pocket. Residues lysine 156 to glutamine 158 form an interaction with tRNA region. The Cysteine persulfide intermediate role is filled by cysteine 206.

It belongs to the MnmA/TRMU family.

Its subcellular location is the cytoplasm. The enzyme catalyses S-sulfanyl-L-cysteinyl-[protein] + uridine(34) in tRNA + AH2 + ATP = 2-thiouridine(34) in tRNA + L-cysteinyl-[protein] + A + AMP + diphosphate + H(+). Catalyzes the 2-thiolation of uridine at the wobble position (U34) of tRNA, leading to the formation of s(2)U34. The polypeptide is tRNA-specific 2-thiouridylase MnmA (Orientia tsutsugamushi (strain Boryong) (Rickettsia tsutsugamushi)).